The primary structure comprises 73 residues: Translation initiation factor IF-1 (73 aa).

In terms of domain architecture, S1-like spans 1–73 (MANKEELIEF…SKGRITYRAR (73 aa)).

Belongs to the IF-1 family. In terms of assembly, component of the 30S ribosomal translation pre-initiation complex which assembles on the 30S ribosome in the order IF-2 and IF-3, IF-1 and N-formylmethionyl-tRNA(fMet); mRNA recruitment can occur at any time during PIC assembly.

The protein resides in the cytoplasm. In terms of biological role, one of the essential components for the initiation of protein synthesis. Stabilizes the binding of IF-2 and IF-3 on the 30S subunit to which N-formylmethionyl-tRNA(fMet) subsequently binds. Helps modulate mRNA selection, yielding the 30S pre-initiation complex (PIC). Upon addition of the 50S ribosomal subunit IF-1, IF-2 and IF-3 are released leaving the mature 70S translation initiation complex. The polypeptide is Translation initiation factor IF-1 (Acinetobacter baylyi (strain ATCC 33305 / BD413 / ADP1)).